The following is a 192-amino-acid chain: Der GTPase-activating protein YihI (192 aa).

The interval 1 to 80 is disordered; sequence MSRTKKTRRI…KAAVKEVKDP (80 aa). 3 stretches are compositionally biased toward basic and acidic residues: residues 9–25, 37–48, and 65–80; these read RITD…KPEQ, TRYELDAKAREE, and DPAE…VKDP.

This sequence belongs to the YihI family. In terms of assembly, interacts with Der.

Its function is as follows. A GTPase-activating protein (GAP) that modifies Der/EngA GTPase function. May play a role in ribosome biogenesis. The sequence is that of Der GTPase-activating protein YihI from Actinobacillus pleuropneumoniae serotype 5b (strain L20).